Here is a 371-residue protein sequence, read N- to C-terminus: Enterobactin C-glucosyltransferase (371 aa).

Belongs to the glycosyltransferase 28 family.

It localises to the cytoplasm. The enzyme catalyses enterobactin + UDP-alpha-D-glucose = monoglucosyl-enterobactin + UDP. It catalyses the reaction monoglucosyl-enterobactin + UDP-alpha-D-glucose = diglucosyl-enterobactin + UDP + H(+). The catalysed reaction is diglucosyl-enterobactin + UDP-alpha-D-glucose = triglucosyl-enterobactin + UDP + H(+). It participates in siderophore biosynthesis; enterobactin biosynthesis. Catalyzes the successive monoglucosylation, diglucosylation and triglucosylation of enterobactin (Ent). Transfers glucosyl groups from uridine-5'-diphosphoglucose (UDP-Glc) to C5 of one, two or three of the 2,3-dihydroxybenzoyl (DHB) units of Ent to yield monoglucosyl-C-Ent (MGE), diglucosyl-C-Ent (DGE) and triglucosyl-C-Ent (TGE). Glucosylation decreases the membrane affinity of Ent and increases the iron acquisition rate. The polypeptide is Enterobactin C-glucosyltransferase (Escherichia coli O6:H1 (strain CFT073 / ATCC 700928 / UPEC)).